The sequence spans 227 residues: Phosphatidylserine decarboxylase proenzyme (227 aa).

S169 (schiff-base intermediate with substrate; via pyruvic acid) is an active-site residue. The residue at position 169 (S169) is a Pyruvic acid (Ser); by autocatalysis. The segment at 197–227 (GRIPTPESGRSSSAEATAAPSASSARRSSAS) is disordered. A compositionally biased stretch (low complexity) spans 206–227 (RSSSAEATAAPSASSARRSSAS).

It belongs to the phosphatidylserine decarboxylase family. PSD-A subfamily. In terms of assembly, heterodimer of a large membrane-associated beta subunit and a small pyruvoyl-containing alpha subunit. Pyruvate is required as a cofactor. Post-translationally, is synthesized initially as an inactive proenzyme. Formation of the active enzyme involves a self-maturation process in which the active site pyruvoyl group is generated from an internal serine residue via an autocatalytic post-translational modification. Two non-identical subunits are generated from the proenzyme in this reaction, and the pyruvate is formed at the N-terminus of the alpha chain, which is derived from the carboxyl end of the proenzyme. The post-translation cleavage follows an unusual pathway, termed non-hydrolytic serinolysis, in which the side chain hydroxyl group of the serine supplies its oxygen atom to form the C-terminus of the beta chain, while the remainder of the serine residue undergoes an oxidative deamination to produce ammonia and the pyruvoyl prosthetic group on the alpha chain.

It is found in the cell membrane. The enzyme catalyses a 1,2-diacyl-sn-glycero-3-phospho-L-serine + H(+) = a 1,2-diacyl-sn-glycero-3-phosphoethanolamine + CO2. It functions in the pathway phospholipid metabolism; phosphatidylethanolamine biosynthesis; phosphatidylethanolamine from CDP-diacylglycerol: step 2/2. Functionally, catalyzes the formation of phosphatidylethanolamine (PtdEtn) from phosphatidylserine (PtdSer). The polypeptide is Phosphatidylserine decarboxylase proenzyme (Salinibacter ruber (strain DSM 13855 / M31)).